Here is a 51-residue protein sequence, read N- to C-terminus: Sperm protamine P1 (51 aa).

The protein belongs to the protamine P1 family. As to expression, testis.

It is found in the nucleus. The protein resides in the chromosome. Functionally, protamines substitute for histones in the chromatin of sperm during the haploid phase of spermatogenesis. They compact sperm DNA into a highly condensed, stable and inactive complex. The sequence is that of Sperm protamine P1 (PRM1) from Trachypithecus cristatus (Silvered leaf-monkey).